A 266-amino-acid chain; its full sequence is Signal peptidase I (266 aa).

Residues Met1–Ser20 lie on the Cytoplasmic side of the membrane. A helical transmembrane segment spans residues Phe21–Val41. At Pro42–Val266 the chain is on the periplasmic side. Catalysis depends on residues Ser45 and Lys108.

This sequence belongs to the peptidase S26 family.

It is found in the cell inner membrane. It carries out the reaction Cleavage of hydrophobic, N-terminal signal or leader sequences from secreted and periplasmic proteins.. This Rickettsia massiliae (strain Mtu5) protein is Signal peptidase I (lepB).